Consider the following 283-residue polypeptide: MVSAAAPSLLILLLLLLGSVPATDARSVPLKATFLEDVAGSGEAEGSSASSPSLPPPWTPALSPTSMGPQPITLGGPSPPTNFLDGIVDFFRQYVMLIAVVGSLAFLLMFIVCAAVITRQKQKASAYYPSSFPKKKYVDQSDRAGGPRAFSEVPDRAPDSRPEEALDSSRQLQADILAATQNLKSPTRAALGGGDGARMVEGRGAEEEEKGSQEGDQEVQGHGVPVETPEAQEEPCSGVLEGAVVAGEGQGELEGSLLLAQEAQGPVGPPESPCACSSVHPSV.

The signal sequence occupies residues 1-25; it reads MVSAAAPSLLILLLLLLGSVPATDA. The Extracellular segment spans residues 26 to 96; that stretch reads RSVPLKATFL…IVDFFRQYVM (71 aa). The O-linked (Xyl...) (chondroitin sulfate) serine glycan is linked to serine 41. Residues 43–52 show a composition bias toward low complexity; the sequence is EAEGSSASSP. Residues 43–76 are disordered; sequence EAEGSSASSPSLPPPWTPALSPTSMGPQPITLGG. A helical transmembrane segment spans residues 97–117; it reads LIAVVGSLAFLLMFIVCAAVI. The Cytoplasmic segment spans residues 118–283; that stretch reads TRQKQKASAY…CACSSVHPSV (166 aa). 2 disordered regions span residues 136-168 and 183-283; these read KYVD…ALDS and LKSP…HPSV. Composition is skewed to basic and acidic residues over residues 153–164 and 198–213; these read VPDRAPDSRPEE and RMVE…KGSQ. Positions 238 to 264 are enriched in low complexity; that stretch reads GVLEGAVVAGEGQGELEGSLLLAQEAQ. Serine 272 bears the Phosphoserine mark.

Interacts with SMAD1, SMAD5 and RUNX2. In terms of tissue distribution, expressed in brain microglia (at protein level). Detected in urine (at protein level). Elevated expression levels seen in the brain of patients with Alzheimer disease. Expressed by osteoblast-like cells in bone tissues and follicular dendritic cells in lymphoid tissues.

It localises to the cell membrane. It is found in the cytoplasm. The protein resides in the endoplasmic reticulum membrane. Its subcellular location is the secreted. In terms of biological role, plays an important role in bone formation and normal bone mineralization. Promotes the differentiation of myoblasts into osteoblasts. May induce the commitment and differentiation of myoblasts into osteoblasts through an enhancement of BMP2 production and interaction with the BMP-RUNX2 pathway. Up-regulates the expression of ATF4, a transcription factor which plays a central role in osteoblast differentiation. Essential for normal spermatogenesis and late testicular differentiation. The protein is Transmembrane protein 119 (TMEM119) of Homo sapiens (Human).